The chain runs to 271 residues: Phosphonoacetaldehyde hydrolase (271 aa).

Residue D12 is the Nucleophile of the active site. The Mg(2+) site is built by D12 and A14. Residue K54 is the Schiff-base intermediate with substrate of the active site. D188 is a binding site for Mg(2+).

This sequence belongs to the HAD-like hydrolase superfamily. PhnX family. Homodimer. Mg(2+) is required as a cofactor.

The catalysed reaction is phosphonoacetaldehyde + H2O = acetaldehyde + phosphate + H(+). Its function is as follows. Involved in phosphonate degradation. The chain is Phosphonoacetaldehyde hydrolase from Vibrio cholerae serotype O1 (strain ATCC 39541 / Classical Ogawa 395 / O395).